The sequence spans 130 residues: Small ribosomal subunit protein uS9 (130 aa).

Residues 109–130 (RMKERKKYGLKGARRAPQFSKR) form a disordered region. The segment covering 111–130 (KERKKYGLKGARRAPQFSKR) has biased composition (basic residues).

Belongs to the universal ribosomal protein uS9 family.

The protein is Small ribosomal subunit protein uS9 of Alkaliphilus metalliredigens (strain QYMF).